Consider the following 2240-residue polypeptide: Nonribisomal peptide synthetase notE (2240 aa).

Residues 22–52 (TETMRETLSSSSSPLSLSSITSPLSSASEPP) form a disordered region. A compositionally biased stretch (low complexity) spans 28-52 (TLSSSSSPLSLSSITSPLSSASEPP). Residues 85-484 (QQRCREAPES…GRKEGQVKIR (400 aa)) are adenylation 1. A Carrier 1 domain is found at 616–692 (PPTTATEHAL…EQARKATPVS (77 aa)). At Ser-653 the chain carries O-(pantetheine 4'-phosphoryl)serine. The interval 732–1144 (EDIFPCTPLQ…DFASPQDRDL (413 aa)) is condensation 1. Residues 1167 to 1564 (QEARQPSREA…GRRDTQLKLR (398 aa)) are adenylation 2. The region spanning 1700–1776 (PVSRGPELRL…ELARCTGEEP (77 aa)) is the Carrier 2 domain. Ser-1737 bears the O-(pantetheine 4'-phosphoryl)serine mark. The condensation 2 stretch occupies residues 1845 to 2159 (FSFHGEVSVE…ILQHQNIDMD (315 aa)). A disordered region spans residues 2008 to 2027 (CTMPVKATPPTDSDDSRPSA).

The protein belongs to the NRP synthetase family.

It carries out the reaction L-proline + L-tryptophan + 2 ATP = brevianamide F + 2 AMP + 2 diphosphate + 2 H(+). It functions in the pathway alkaloid biosynthesis. Nonribisomal peptide synthetase; part of the gene cluster that mediates the biosynthesis of notoamide, a fungal indole alkaloid that belongs to a family of natural products containing a characteristic bicyclo[2.2.2]diazaoctane core. The first step of notoamide biosynthesis involves coupling of L-proline and L-tryptophan by the bimodular NRPS notE, to produce cyclo-L-tryptophan-L-proline called brevianamide F. The reverse prenyltransferase notF then acts as a deoxybrevianamide E synthase and converts brevianamide F to deoxybrevianamide E via reverse prenylation at C-2 of the indole ring leading to the bicyclo[2.2.2]diazaoctane core. Deoxybrevianamide E is further hydroxylated at C-6 of the indole ring, likely catalyzed by the cytochrome P450 monooxygenase notG, to yield 6-hydroxy-deoxybrevianamide E. 6-hydroxy-deoxybrevianamide E is a specific substrate of the prenyltransferase notC for normal prenylation at C-7 to produce 6-hydroxy-7-prenyl-deoxybrevianamide, also called notoamide S. As the proposed pivotal branching point in notoamide biosynthesis, notoamide S can be diverted to notoamide E through an oxidative pyran ring closure putatively catalyzed by either notH cytochrome P450 monooxygenase or the notD FAD-linked oxidoreductase. This step would be followed by an indole 2,3-epoxidation-initiated pinacol-like rearrangement catalyzed by the notB FAD-dependent monooxygenase leading to the formation of notoamide C and notoamide D. On the other hand notoamide S is converted to notoamide T by notH (or notD), a bifunctional oxidase that also functions as the intramolecular Diels-Alderase responsible for generation of (+)-notoamide T. To generate antipodal (-)-notoaminide T, notH' (or notD') in Aspergillus versicolor is expected to catalyze a Diels-Alder reaction leading to the opposite stereochemistry. The remaining oxidoreductase notD (or notH) likely catalyzes the oxidative pyran ring formation to yield (+)-stephacidin A. The FAD-dependent monooxygenase notI is highly similar to notB and is predicted to catalyze a similar conversion from (+)-stephacidin A to (-)-notoamide B via the 2,3-epoxidation of (+)-stephacidin A followed by a pinacol-type rearrangement. Finally, it remains unclear which enzyme could be responsible for the final hydroxylation steps leading to notoamide A and sclerotiamide. This chain is Nonribisomal peptide synthetase notE, found in Aspergillus sp. (strain MF297-2).